Consider the following 313-residue polypeptide: Mas-related G-protein coupled receptor member A4 (313 aa).

Topologically, residues 1–25 (MAPTTTNPMNETIPGSIDIETLIPN) are extracellular. N10 carries N-linked (GlcNAc...) asparagine glycosylation. The chain crosses the membrane as a helical span at residues 26–46 (LMIIIFGLVGLTGNVILFWLL). Residues 47-54 (GFHLHRNA) lie on the Cytoplasmic side of the membrane. A helical transmembrane segment spans residues 55–75 (FLVYILNLALADFLFLLCHII). Residue N76 is glycosylated (N-linked (GlcNAc...) asparagine). Residues 76 to 93 (NSTMLLLKVHLPNNILNH) lie on the Extracellular side of the membrane. The chain crosses the membrane as a helical span at residues 94-114 (CFDIIMTVLYITGLSMLSAIS). The Cytoplasmic portion of the chain corresponds to 115 to 137 (TERCLSVLCPIWYRCRRPEHTST). A helical transmembrane segment spans residues 138–158 (VLCAVIWFLPLLICILNGYFC). At 159 to 182 (HFFGPKYVIDSVCLATNFFIRTYP) the chain is on the extracellular side. The helical transmembrane segment at 183 to 203 (MFLFIVLCLSTLALLARLFCG) threads the bilayer. Residues 204–219 (AGKTKFTRLFVTIMLT) lie on the Cytoplasmic side of the membrane. A helical membrane pass occupies residues 220–240 (VLVFLLCGLPLGFFWFLVPWI). The Extracellular portion of the chain corresponds to 241–255 (NRDFSVLDYILFQTS). A helical membrane pass occupies residues 256 to 276 (LVLTSVNSCANPIIYFFVGSF). The Cytoplasmic segment spans residues 277–313 (RHRLKHKTLKMVLQSALQDTPETPENMVEMSRSKAEP).

The protein belongs to the G-protein coupled receptor 1 family. Mas subfamily. In terms of tissue distribution, expressed in a subset of sensory neurons that includes nociceptors. Expressed in the subclass of non-peptidergic sensory neurons that are IB4(+) and VR1(-).

The protein localises to the cell membrane. In terms of biological role, orphan receptor. May be a receptor for RFamide-family neuropeptides such as NPFF and NPAF, which are analgesic in vivo. May regulate nociceptor function and/or development, including the sensation or modulation of pain. This Mus musculus (Mouse) protein is Mas-related G-protein coupled receptor member A4 (Mrgpra4).